A 456-amino-acid polypeptide reads, in one-letter code: MQTVLKHVYIETYGCQMNEYDSSKMLAVLKNSHGITPVATPEEADVLLLNTCSVREKAQEKVFSQLGRWKSLKERKPHLIIGVGGCVASQEGEMIRRRAPEVDVVFGPQTLHRLPNLIEEAQRSRGGVVDVSFPEIEKFDHLPEPRAEGPTAYVSVMEGCSKYCTYCVVPYTRGAEISRPFDDVLAECATLAAQGVREINLLGQNVNAYRGAMHDGTIADLALLIEYVAAIPNIGRIRFTTSHPSEFSDALIETYRRVPKLVSHLHLPVQSGSNRILALMKRDYKVAEYQEKLAKIRAIRPDISFSSDFIVGFPGEEEEDFQATMDLIEAVFFDTSYSFIYSQRPGTPASTMPDRVPLTVKKERLARLQARILEMAASISEAMVGTEQWVLVDRLSRKSEREVSGRTENNRVVNFSAPASLIGRFAKVQITAAYKNSLRGRLIEAELLPDPVVYTR.

In terms of domain architecture, MTTase N-terminal spans K6–R123. 6 residues coordinate [4Fe-4S] cluster: C15, C52, C86, C160, C164, and C167. The 235-residue stretch at R146–S380 folds into the Radical SAM core domain. Positions E381 to E444 constitute a TRAM domain.

It belongs to the methylthiotransferase family. MiaB subfamily. As to quaternary structure, monomer. [4Fe-4S] cluster is required as a cofactor.

It is found in the cytoplasm. It catalyses the reaction N(6)-dimethylallyladenosine(37) in tRNA + (sulfur carrier)-SH + AH2 + 2 S-adenosyl-L-methionine = 2-methylsulfanyl-N(6)-dimethylallyladenosine(37) in tRNA + (sulfur carrier)-H + 5'-deoxyadenosine + L-methionine + A + S-adenosyl-L-homocysteine + 2 H(+). Functionally, catalyzes the methylthiolation of N6-(dimethylallyl)adenosine (i(6)A), leading to the formation of 2-methylthio-N6-(dimethylallyl)adenosine (ms(2)i(6)A) at position 37 in tRNAs that read codons beginning with uridine. This Dichelobacter nodosus (strain VCS1703A) protein is tRNA-2-methylthio-N(6)-dimethylallyladenosine synthase.